A 784-amino-acid polypeptide reads, in one-letter code: ATP-dependent 6-phosphofructokinase, platelet type (784 aa).

Methionine 1 is subject to N-acetylmethionine. An N-terminal catalytic PFK domain 1 region spans residues 1 to 399; it reads MDADDSRAPK…NLNTYKRLAI (399 aa). Residues serine 6, serine 12, and serine 21 each carry the phosphoserine modification. ATP is bound by residues glycine 34, 97-98, and 127-130; these read RC and GDGS. Aspartate 128 is a binding site for Mg(2+). Serine 142 bears the Phosphoserine mark. Substrate contacts are provided by residues 173–175, arginine 210, 217–219, glutamate 273, arginine 301, and 307–310; these read SID, MGR, and HVQR. Aspartate 175 (proton acceptor) is an active-site residue. Serine 386 is subject to Phosphoserine. Lysine 395 is modified (N6-acetyllysine). The segment at 400-411 is interdomain linker; the sequence is KLPDDQIPKTNC. Residues 412 to 784 form a C-terminal regulatory PFK domain 2 region; it reads NVAVINVGAP…QLEHVQPWSV (373 aa). Arginine 481 serves as a coordination point for beta-D-fructose 2,6-bisphosphate. The residue at position 486 (lysine 486) is an N6-acetyllysine. Beta-D-fructose 2,6-bisphosphate is bound by residues 538–542, arginine 576, 583–585, and glutamate 639; these read TVSNN and MGG. Serine 540 carries O-linked (GlcNAc) serine glycosylation. A Phosphotyrosine modification is found at tyrosine 651. Beta-D-fructose 2,6-bisphosphate contacts are provided by residues arginine 665 and 671-674; that span reads HMQQ. N6-acetyllysine is present on lysine 688. Arginine 744 is a binding site for beta-D-fructose 2,6-bisphosphate. Phosphoserine is present on serine 783.

It belongs to the phosphofructokinase type A (PFKA) family. ATP-dependent PFK group I subfamily. Eukaryotic two domain clade 'E' sub-subfamily. As to quaternary structure, homo- and heterotetramers. Phosphofructokinase (PFK) enzyme functions as a tetramer composed of different combinations of 3 types of subunits, called PFKM (where M stands for Muscle), PFKL (Liver) and PFKP (Platelet). The composition of the PFK tetramer differs according to the tissue type it is present in. In muscles, it is composed of 4 PFKM subunits (also called M4). In the liver, the predominant form is a tetramer of PFKL subunits (L4). In erythrocytes, both PFKM and PFKL subunits randomly tetramerize to form M4, L4 and other combinations (ML3, M2L2, M3L). In platelets, brain and fibroblasts, PFK contains a higher proportion of PFKP subunits. The kinetic and regulatory properties of the tetrameric enzyme are dependent on the subunit composition, hence can vary across tissues. Interacts with ATG4B; promoting phosphorylation of ATG4B. It depends on Mg(2+) as a cofactor. In terms of processing, phosphorylation at Ser-386 promotes interaction with ATG4B. GlcNAcylation decreases enzyme activity.

Its subcellular location is the cytoplasm. The enzyme catalyses beta-D-fructose 6-phosphate + ATP = beta-D-fructose 1,6-bisphosphate + ADP + H(+). Its pathway is carbohydrate degradation; glycolysis; D-glyceraldehyde 3-phosphate and glycerone phosphate from D-glucose: step 3/4. With respect to regulation, allosterically activated by ADP, AMP, or fructose 2,6-bisphosphate, and allosterically inhibited by ATP or citrate. Functionally, catalyzes the phosphorylation of D-fructose 6-phosphate to fructose 1,6-bisphosphate by ATP, the first committing step of glycolysis. The polypeptide is ATP-dependent 6-phosphofructokinase, platelet type (PFKP) (Homo sapiens (Human)).